Reading from the N-terminus, the 249-residue chain is Isoamyl acetate-hydrolyzing esterase 1 homolog (249 aa).

Serine 24 acts as the Nucleophile in catalysis. Lysine 63 carries the N6-succinyllysine modification. Aspartate 197 acts as the Proton donor in catalysis. The active-site Proton acceptor is histidine 200.

Belongs to the 'GDSL' lipolytic enzyme family. IAH1 subfamily.

Its function is as follows. Probable lipase. This Mus musculus (Mouse) protein is Isoamyl acetate-hydrolyzing esterase 1 homolog (Iah1).